Here is a 369-residue protein sequence, read N- to C-terminus: 4-hydroxy-3-methylbut-2-en-1-yl diphosphate synthase (flavodoxin) (369 aa).

Positions 270, 273, 305, and 312 each coordinate [4Fe-4S] cluster.

This sequence belongs to the IspG family. The cofactor is [4Fe-4S] cluster.

The enzyme catalyses (2E)-4-hydroxy-3-methylbut-2-enyl diphosphate + oxidized [flavodoxin] + H2O + 2 H(+) = 2-C-methyl-D-erythritol 2,4-cyclic diphosphate + reduced [flavodoxin]. It participates in isoprenoid biosynthesis; isopentenyl diphosphate biosynthesis via DXP pathway; isopentenyl diphosphate from 1-deoxy-D-xylulose 5-phosphate: step 5/6. In terms of biological role, converts 2C-methyl-D-erythritol 2,4-cyclodiphosphate (ME-2,4cPP) into 1-hydroxy-2-methyl-2-(E)-butenyl 4-diphosphate. The protein is 4-hydroxy-3-methylbut-2-en-1-yl diphosphate synthase (flavodoxin) of Pseudomonas entomophila (strain L48).